Here is a 603-residue protein sequence, read N- to C-terminus: Elongation factor 4 (603 aa).

Residues 5–187 (RHIRNFCIIA…AVVNFVPPPK (183 aa)) form the tr-type G domain. Residues 17–22 (DHGKST) and 134–137 (NKID) each bind GTP.

Belongs to the TRAFAC class translation factor GTPase superfamily. Classic translation factor GTPase family. LepA subfamily.

The protein localises to the cell membrane. It carries out the reaction GTP + H2O = GDP + phosphate + H(+). Required for accurate and efficient protein synthesis under certain stress conditions. May act as a fidelity factor of the translation reaction, by catalyzing a one-codon backward translocation of tRNAs on improperly translocated ribosomes. Back-translocation proceeds from a post-translocation (POST) complex to a pre-translocation (PRE) complex, thus giving elongation factor G a second chance to translocate the tRNAs correctly. Binds to ribosomes in a GTP-dependent manner. The sequence is that of Elongation factor 4 from Symbiobacterium thermophilum (strain DSM 24528 / JCM 14929 / IAM 14863 / T).